The chain runs to 151 residues: Transcription elongation factor Spt5 (151 aa).

The KOW domain maps to 98-128 (PGQVVEIVAGAFKGMKARVIDVNQSKGQVTV).

The protein belongs to the archaeal Spt5 family. In terms of assembly, heterodimer composed of Spt4 and Spt5. Interacts with RNA polymerase (RNAP).

Its function is as follows. Stimulates transcription elongation. The sequence is that of Transcription elongation factor Spt5 from Aeropyrum pernix (strain ATCC 700893 / DSM 11879 / JCM 9820 / NBRC 100138 / K1).